Consider the following 199-residue polypeptide: uncharacterized protein (199 aa).

Helical transmembrane passes span 40–60 (LLICVFKFCSLFMFSKFFCFL), 86–106 (VLTGASSSFTTTAVVAATFPF), 117–137 (TSWPLFIMLMSSSALPLLTSS), and 166–186 (FLLAMSMFVDFFSHPCFALIL).

It is found in the membrane. This is an uncharacterized protein from Saccharomyces cerevisiae (strain ATCC 204508 / S288c) (Baker's yeast).